A 246-amino-acid polypeptide reads, in one-letter code: Exosome complex component Rrp41 (246 aa).

This sequence belongs to the RNase PH family. Rrp41 subfamily. In terms of assembly, component of the archaeal exosome complex. Forms a hexameric ring-like arrangement composed of 3 Rrp41-Rrp42 heterodimers. The hexameric ring associates with a trimer of Rrp4 and/or Csl4 subunits.

It is found in the cytoplasm. Catalytic component of the exosome, which is a complex involved in RNA degradation. Has 3'-&gt;5' exoribonuclease activity. Can also synthesize heteromeric RNA-tails. The sequence is that of Exosome complex component Rrp41 from Pyrobaculum islandicum (strain DSM 4184 / JCM 9189 / GEO3).